The sequence spans 365 residues: Probable L-tyrosine/L-aspartate decarboxylase (365 aa).

At Lys224 the chain carries N6-(pyridoxal phosphate)lysine.

It belongs to the group II decarboxylase family. MfnA subfamily. It depends on pyridoxal 5'-phosphate as a cofactor.

The catalysed reaction is L-tyrosine + H(+) = tyramine + CO2. It carries out the reaction L-aspartate + H(+) = beta-alanine + CO2. Its pathway is cofactor biosynthesis; methanofuran biosynthesis. It participates in cofactor biosynthesis; coenzyme A biosynthesis. Catalyzes the decarboxylation of L-tyrosine to produce tyramine for methanofuran biosynthesis. Can also catalyze the decarboxylation of L-aspartate to produce beta-alanine for coenzyme A (CoA) biosynthesis. This chain is Probable L-tyrosine/L-aspartate decarboxylase, found in Methanoregula boonei (strain DSM 21154 / JCM 14090 / 6A8).